A 75-amino-acid polypeptide reads, in one-letter code: UPF0346 protein LSL_0716 (75 aa).

This sequence belongs to the UPF0346 family.

The sequence is that of UPF0346 protein LSL_0716 from Ligilactobacillus salivarius (strain UCC118) (Lactobacillus salivarius).